Here is a 215-residue protein sequence, read N- to C-terminus: Cytochrome b6 (215 aa).

Residues 32–52 form a helical membrane-spanning segment; that stretch reads IFYCLGGIVFVSFLIQVATGF. Residue cysteine 35 coordinates heme c. Histidine 86 and histidine 100 together coordinate heme b. Transmembrane regions (helical) follow at residues 90–110, 116–136, and 186–206; these read VSMM…TGGF, LTWV…VTGY, and LHTF…FLMI. 2 residues coordinate heme b: histidine 187 and histidine 202.

It belongs to the cytochrome b family. PetB subfamily. In terms of assembly, the 4 large subunits of the cytochrome b6-f complex are cytochrome b6, subunit IV (17 kDa polypeptide, PetD), cytochrome f and the Rieske protein, while the 4 small subunits are PetG, PetL, PetM and PetN. The complex functions as a dimer. It depends on heme b as a cofactor. Requires heme c as cofactor.

Its subcellular location is the plastid. The protein localises to the chloroplast thylakoid membrane. Its function is as follows. Component of the cytochrome b6-f complex, which mediates electron transfer between photosystem II (PSII) and photosystem I (PSI), cyclic electron flow around PSI, and state transitions. This is Cytochrome b6 from Pyropia yezoensis (Susabi-nori).